We begin with the raw amino-acid sequence, 442 residues long: MHISRPRRVAVLSVHTSPLAQPGTGDAGGMNVYVLQSAIQLAKRGVEVEIFTRATSSADAPVVDAAPGVRVRNIAAGPFEGLDKADLPTQLCAFVAGVLREEARHEPGYYSLIHSHYWLSGQVGWLARDRWGVPLVHTAHTLAAVKNLSLAEGDTPEPAARQIGEQQVVAESDRLVANTTDEAKALHELYGADPTRIDVVAPGADLTRYRPGDRDSARASLGLDPGEIVVTFVGRIQPLKAPDVLLRAAAEVISRSPGLPLRILVVGGPSGTGLARPDVLIELARSLGITAQVTFLPPQAPERLADVYRASDLVAVPSYSESFGLVAIEAQACGTPVIAADVGGLGVAVRNGETGLLVQGHRTEDWAGALESLVTAPTRLAELAAQAPRHAENFSWEHTADGLLESYRKAAVNYNNGTGPSDFSPRRARGLWRLRRTGGVRT.

A 1D-myo-inositol 3-phosphate-binding site is contributed by His15. UDP-N-acetyl-alpha-D-glucosamine-binding positions include 21–22 (QP) and Gly29. Residues 26–31 (DAGGMN), Lys84, Tyr117, Thr141, and Arg161 each bind 1D-myo-inositol 3-phosphate. Arg235, Lys240, and Gln299 together coordinate UDP-N-acetyl-alpha-D-glucosamine. Positions 308, 309, and 311 each coordinate Mg(2+). UDP-N-acetyl-alpha-D-glucosamine is bound by residues Glu321 and Glu329. Thr335 serves as a coordination point for Mg(2+).

Belongs to the glycosyltransferase group 1 family. MshA subfamily. As to quaternary structure, homodimer.

The enzyme catalyses 1D-myo-inositol 3-phosphate + UDP-N-acetyl-alpha-D-glucosamine = 1D-myo-inositol 2-acetamido-2-deoxy-alpha-D-glucopyranoside 3-phosphate + UDP + H(+). Catalyzes the transfer of a N-acetyl-glucosamine moiety to 1D-myo-inositol 3-phosphate to produce 1D-myo-inositol 2-acetamido-2-deoxy-glucopyranoside 3-phosphate in the mycothiol biosynthesis pathway. The chain is D-inositol 3-phosphate glycosyltransferase from Rhodococcus erythropolis (strain PR4 / NBRC 100887).